The following is a 188-amino-acid chain: dCTP deaminase (188 aa).

DCTP contacts are provided by residues 111-116 (KSTYAR), 135-137 (TLE), Gln-156, Tyr-170, and Gln-180. The active-site Proton donor/acceptor is Glu-137.

This sequence belongs to the dCTP deaminase family. Homotrimer.

The enzyme catalyses dCTP + H2O + H(+) = dUTP + NH4(+). The protein operates within pyrimidine metabolism; dUMP biosynthesis; dUMP from dCTP (dUTP route): step 1/2. Catalyzes the deamination of dCTP to dUTP. The chain is dCTP deaminase from Pseudomonas putida (strain GB-1).